Here is a 220-residue protein sequence, read N- to C-terminus: Thiopurine S-methyltransferase (220 aa).

4 residues coordinate S-adenosyl-L-methionine: Trp-10, Leu-45, Glu-66, and Arg-123.

It belongs to the class I-like SAM-binding methyltransferase superfamily. TPMT family.

The protein localises to the cytoplasm. The catalysed reaction is S-adenosyl-L-methionine + a thiopurine = S-adenosyl-L-homocysteine + a thiopurine S-methylether.. In Nitrosomonas eutropha (strain DSM 101675 / C91 / Nm57), this protein is Thiopurine S-methyltransferase.